We begin with the raw amino-acid sequence, 93 residues long: Large ribosomal subunit protein bL27 (93 aa).

Residues 1 to 9 (MLRLDLQFF) constitute a propeptide that is removed on maturation.

Belongs to the bacterial ribosomal protein bL27 family. Post-translationally, the N-terminus is cleaved by ribosomal processing cysteine protease Prp.

This chain is Large ribosomal subunit protein bL27, found in Bacillus licheniformis (strain ATCC 14580 / DSM 13 / JCM 2505 / CCUG 7422 / NBRC 12200 / NCIMB 9375 / NCTC 10341 / NRRL NRS-1264 / Gibson 46).